Consider the following 749-residue polypeptide: Probable serine/threonine-protein kinase drkC (749 aa).

The first 31 residues, 1 to 31 (MIIINKYIRMNKIAILFSFFILICCTGYSIS), serve as a signal peptide directing secretion. Residues 32-423 (YKINGINENK…TSPNYQKIIY (392 aa)) are Extracellular-facing. The disordered stretch occupies residues 124 to 153 (DRTDQVSTSSSSSSFSEENKKSSSDDSAPA). A compositionally biased stretch (low complexity) spans 130 to 139 (STSSSSSSFS). N-linked (GlcNAc...) asparagine glycans are attached at residues N157, N189, N283, N358, N373, N381, and N397. The chain crosses the membrane as a helical span at residues 424–444 (IVVGVGIAVLLIIAVGIYFII). Residues 445 to 749 (RLRIKNKRLN…QEIVKRLEAM (305 aa)) are Cytoplasmic-facing. The 259-residue stretch at 491–749 (IVVQNRIGRG…QEIVKRLEAM (259 aa)) folds into the Protein kinase domain. ATP contacts are provided by residues 497 to 505 (IGRGSCAEV) and K518. Residue D615 is the Proton acceptor of the active site.

This sequence belongs to the protein kinase superfamily. TKL Ser/Thr protein kinase family.

It localises to the membrane. The enzyme catalyses L-seryl-[protein] + ATP = O-phospho-L-seryl-[protein] + ADP + H(+). It catalyses the reaction L-threonyl-[protein] + ATP = O-phospho-L-threonyl-[protein] + ADP + H(+). This Dictyostelium discoideum (Social amoeba) protein is Probable serine/threonine-protein kinase drkC (drkC).